Here is a 147-residue protein sequence, read N- to C-terminus: METLTAISRWLAKQHVVTWCVQQEGELWCANAFYLFDAQKVAFYILTEEKTRHAQMSGPQAAVAGTVNGQPKTVALIRGVQFKGEIRRLEGEESDLARQAYNRRFPVARMLSAPVWEIRLDEIKFTDNTLGFGKKMIWLRNSGTEQA.

Belongs to the UPF0306 family.

This is UPF0306 protein YhbP from Escherichia coli O6:K15:H31 (strain 536 / UPEC).